Here is a 71-residue protein sequence, read N- to C-terminus: Large ribosomal subunit protein bL31 (71 aa).

The Zn(2+) site is built by C16, C18, C37, and C40.

The protein belongs to the bacterial ribosomal protein bL31 family. Type A subfamily. As to quaternary structure, part of the 50S ribosomal subunit. It depends on Zn(2+) as a cofactor.

Its function is as follows. Binds the 23S rRNA. This chain is Large ribosomal subunit protein bL31, found in Pseudoalteromonas atlantica (strain T6c / ATCC BAA-1087).